We begin with the raw amino-acid sequence, 743 residues long: Homeobox-leucine zipper protein PROTODERMAL FACTOR 2 (743 aa).

The segment at 1–72 (MYHPNMFESH…KKRYHRHTQR (72 aa)) is disordered. The segment covering 30 to 39 (SREDDFETKS) has biased composition (basic and acidic residues). Residues 60–71 (PNKKKRYHRHTQ) are compositionally biased toward basic residues. The homeobox DNA-binding region spans 62–121 (KKKRYHRHTQRQIQELESFFKECPHPDDKQRKELSRDLNLEPLQVKFWFQNKRTQMKAQS). Positions 110–192 (FQNKRTQMKA…DRISAIAAKY (83 aa)) form a coiled coil. Residues 244 to 476 (SETDKPIIVE…LERQCERLAS (233 aa)) form the START domain.

The protein belongs to the HD-ZIP homeobox family. Class IV subfamily. In terms of assembly, interacts with GAI/RGA2, RGA/RGA1/GRS, RGL2/SCL19 and ATML1. Binds to AIL7/PLT7, ANT, BBM and AIL1. In terms of tissue distribution, specifically expressed in the layer 1 (L1) of shoot meristems.

The protein localises to the nucleus. Its function is as follows. Probable transcription factor that binds to the L1 box DNA sequence 5'-TAAATG[CT]A-3'. Plays a role in maintaining the identity of L1 cells, possibly by interacting with their L1 box or other target-gene promoters; binds to the LIP1 gene promoter and stimulates its expression upon imbibition. Acts as a positive regulator of gibberellins (GAs)-regulated epidermal gene expression (e.g. LIP1, LIP2, LTP1, FDH and PDF1). Functionally redundant to ATML1. Involved, together with HDG proteins (e.g. HDG1, HDG2, HDG5 and HDG12), in the regulation of flower organs development by promoting the expression of APETALA 3 (AP3) in the epidermis and internal cell layers of developing flowers. Seems to promote cell differentiation. The polypeptide is Homeobox-leucine zipper protein PROTODERMAL FACTOR 2 (Arabidopsis thaliana (Mouse-ear cress)).